The chain runs to 1320 residues: Phosphoribosylformylglycinamidine synthase (1320 aa).

ATP is bound by residues 310–321 (GAATGSGGEIRD) and Ala-686. Residues Asp-687, Glu-726, Asn-730, and Asp-894 each coordinate Mg(2+). Ser-896 contributes to the ATP binding site. One can recognise a Glutamine amidotransferase type-1 domain in the interval 1067 to 1320 (VAILREQGVN…MFRNARAFIG (254 aa)). The active-site Nucleophile is Cys-1160. Residues His-1285 and Glu-1287 contribute to the active site.

This sequence in the N-terminal section; belongs to the FGAMS family. As to quaternary structure, monomer.

It is found in the cytoplasm. It catalyses the reaction N(2)-formyl-N(1)-(5-phospho-beta-D-ribosyl)glycinamide + L-glutamine + ATP + H2O = 2-formamido-N(1)-(5-O-phospho-beta-D-ribosyl)acetamidine + L-glutamate + ADP + phosphate + H(+). The protein operates within purine metabolism; IMP biosynthesis via de novo pathway; 5-amino-1-(5-phospho-D-ribosyl)imidazole from N(2)-formyl-N(1)-(5-phospho-D-ribosyl)glycinamide: step 1/2. In terms of biological role, phosphoribosylformylglycinamidine synthase involved in the purines biosynthetic pathway. Catalyzes the ATP-dependent conversion of formylglycinamide ribonucleotide (FGAR) and glutamine to yield formylglycinamidine ribonucleotide (FGAM) and glutamate. In Colwellia psychrerythraea (strain 34H / ATCC BAA-681) (Vibrio psychroerythus), this protein is Phosphoribosylformylglycinamidine synthase.